Here is a 259-residue protein sequence, read N- to C-terminus: Probable kinetochore protein spc25 (259 aa).

Residues 1-20 (MSRKSVMSSTFEPSLSTSRQ) show a composition bias toward polar residues. The interval 1–25 (MSRKSVMSSTFEPSLSTSRQPLGPS) is disordered. The stretch at 59–162 (RKRVLEERNQ…HAAQLEAQAR (104 aa)) forms a coiled coil.

This sequence belongs to the SPC25 family. As to quaternary structure, component of the NDC80 complex, which consists of kpr-1/ndc80, kpr-2/nuf2, kpr-3/spc24 and kpr-4/spc25.

Its subcellular location is the nucleus. The protein resides in the chromosome. The protein localises to the centromere. It is found in the kinetochore. Functionally, acts as a component of the essential kinetochore-associated NDC80 complex, which is required for chromosome segregation and spindle checkpoint activity. This chain is Probable kinetochore protein spc25 (kpr-4), found in Neurospora crassa (strain ATCC 24698 / 74-OR23-1A / CBS 708.71 / DSM 1257 / FGSC 987).